Consider the following 188-residue polypeptide: Acireductone dioxygenase (188 aa).

Fe(2+) is bound by residues His-97, His-99, Glu-103, and His-141. The Ni(2+) site is built by His-97, His-99, Glu-103, and His-141.

This sequence belongs to the acireductone dioxygenase (ARD) family. Monomer. It depends on Fe(2+) as a cofactor. Ni(2+) serves as cofactor.

It catalyses the reaction 1,2-dihydroxy-5-(methylsulfanyl)pent-1-en-3-one + O2 = 3-(methylsulfanyl)propanoate + CO + formate + 2 H(+). The catalysed reaction is 1,2-dihydroxy-5-(methylsulfanyl)pent-1-en-3-one + O2 = 4-methylsulfanyl-2-oxobutanoate + formate + 2 H(+). It participates in amino-acid biosynthesis; L-methionine biosynthesis via salvage pathway; L-methionine from S-methyl-5-thio-alpha-D-ribose 1-phosphate: step 5/6. Catalyzes 2 different reactions between oxygen and the acireductone 1,2-dihydroxy-3-keto-5-methylthiopentene (DHK-MTPene) depending upon the metal bound in the active site. Fe-containing acireductone dioxygenase (Fe-ARD) produces formate and 2-keto-4-methylthiobutyrate (KMTB), the alpha-ketoacid precursor of methionine in the methionine recycle pathway. Ni-containing acireductone dioxygenase (Ni-ARD) produces methylthiopropionate, carbon monoxide and formate, and does not lie on the methionine recycle pathway. In Xanthomonas euvesicatoria pv. vesicatoria (strain 85-10) (Xanthomonas campestris pv. vesicatoria), this protein is Acireductone dioxygenase.